A 273-amino-acid polypeptide reads, in one-letter code: Outer surface protein A (273 aa).

The first 16 residues, 1 to 16 (MKKYLLGIGLILALIA), serve as a signal peptide directing secretion. Cys-17 is lipidated: N-palmitoyl cysteine. Cys-17 is lipidated: S-diacylglycerol cysteine.

It belongs to the OspA lipoprotein family.

The protein localises to the cell outer membrane. Its subcellular location is the cell surface. This chain is Outer surface protein A, found in Borreliella burgdorferi (Lyme disease spirochete).